The sequence spans 438 residues: uncharacterized protein (438 aa).

This is an uncharacterized protein from Methanocaldococcus jannaschii (strain ATCC 43067 / DSM 2661 / JAL-1 / JCM 10045 / NBRC 100440) (Methanococcus jannaschii).